A 294-amino-acid polypeptide reads, in one-letter code: Putative immediate early glycoprotein (294 aa).

Residues 1-21 form the signal peptide; sequence MKKLTMESLLVYTFVMGVCFT. A helical transmembrane segment spans residues 262–282; the sequence is LFFLAGGAFTMLLLLCCLSMI.

This sequence belongs to the herpesviridae immediate early glycoprotein family.

The protein localises to the host membrane. The sequence is that of Putative immediate early glycoprotein (U18) from Homo sapiens (Human).